Reading from the N-terminus, the 317-residue chain is Ribosomal protein L11 methyltransferase (317 aa).

Residues Thr-158, Gly-179, Asp-201, and Asn-244 each coordinate S-adenosyl-L-methionine.

This sequence belongs to the methyltransferase superfamily. PrmA family.

The protein localises to the cytoplasm. It carries out the reaction L-lysyl-[protein] + 3 S-adenosyl-L-methionine = N(6),N(6),N(6)-trimethyl-L-lysyl-[protein] + 3 S-adenosyl-L-homocysteine + 3 H(+). In terms of biological role, methylates ribosomal protein L11. The protein is Ribosomal protein L11 methyltransferase of Streptococcus pyogenes serotype M49 (strain NZ131).